The following is a 155-amino-acid chain: Small ribosomal subunit protein uS7cz/uS7cy (155 aa).

It belongs to the universal ribosomal protein uS7 family. As to quaternary structure, part of the 30S ribosomal subunit.

It is found in the plastid. Its subcellular location is the chloroplast. One of the primary rRNA binding proteins, it binds directly to 16S rRNA where it nucleates assembly of the head domain of the 30S subunit. This Lemna minor (Common duckweed) protein is Small ribosomal subunit protein uS7cz/uS7cy (rps7-A).